Reading from the N-terminus, the 187-residue chain is Transmembrane protein 11-A, mitochondrial (187 aa).

2 consecutive transmembrane segments (helical) span residues threonine 79–proline 95 and valine 102–isoleucine 119.

It belongs to the TMEM11 family.

Its subcellular location is the mitochondrion inner membrane. In terms of biological role, plays a role in mitochondrial morphogenesis. The sequence is that of Transmembrane protein 11-A, mitochondrial (tmem11-a) from Xenopus laevis (African clawed frog).